Reading from the N-terminus, the 282-residue chain is NH(3)-dependent NAD(+) synthetase (282 aa).

Residue 51-58 participates in ATP binding; sequence GISGGVDS. D57 contributes to the Mg(2+) binding site. Residue R148 coordinates deamido-NAD(+). T168 lines the ATP pocket. E173 is a Mg(2+) binding site. Residues K181 and D188 each coordinate deamido-NAD(+). ATP contacts are provided by K197 and T219. 268 to 269 provides a ligand contact to deamido-NAD(+); it reads HK.

It belongs to the NAD synthetase family. As to quaternary structure, homodimer.

The catalysed reaction is deamido-NAD(+) + NH4(+) + ATP = AMP + diphosphate + NAD(+) + H(+). It participates in cofactor biosynthesis; NAD(+) biosynthesis; NAD(+) from deamido-NAD(+) (ammonia route): step 1/1. Functionally, catalyzes the ATP-dependent amidation of deamido-NAD to form NAD. Uses ammonia as a nitrogen source. The sequence is that of NH(3)-dependent NAD(+) synthetase from Burkholderia cenocepacia (strain HI2424).